The following is a 117-amino-acid chain: Large ribosomal subunit protein bL20 (117 aa).

This sequence belongs to the bacterial ribosomal protein bL20 family.

Its function is as follows. Binds directly to 23S ribosomal RNA and is necessary for the in vitro assembly process of the 50S ribosomal subunit. It is not involved in the protein synthesizing functions of that subunit. The polypeptide is Large ribosomal subunit protein bL20 (Campylobacter hominis (strain ATCC BAA-381 / DSM 21671 / CCUG 45161 / LMG 19568 / NCTC 13146 / CH001A)).